The following is a 427-amino-acid chain: MSAIVDIIGREVLDSRGNPTVECDVLLESGVMGRAAVPSGASTGSREAIELRDGDKSRYLGKGVLKAVEHINTEISEAIMGLDASEQAFLDRTLIDLDGTENKSRLGANAMLAVSMAVAKAAAEEAGLPLYRYFGGSGAMQMPVPMMNIVNGGAHANNSLDIQEFMVMPVGQSSFREALRCGAEIFHALKKILADKGMSTAVGDEGGFAPNFASNEECLNTILSAIEQAGYKAGEDVLLALDCAASEFYKDGKYHLEGEGLQLSSEDFANYLANLADKFPIVSIEDGMHESDWAGWKALTDKLGKKVQLVGDDLFVTNTKILKEGIEKGIANSILIKINQIGTLTETFAAIEMAKRAGYTAVISHRSGETEDSTIADIAVGTNAGQIKTGSLSRSDRMAKYNQLLRIEEDLGDIASYPGKSAFYNLR.

Gln163 is a binding site for (2R)-2-phosphoglycerate. Glu205 (proton donor) is an active-site residue. Mg(2+) is bound by residues Asp242, Glu285, and Asp312. (2R)-2-phosphoglycerate contacts are provided by Lys337, Arg366, Ser367, and Lys388. The active-site Proton acceptor is the Lys337.

The protein belongs to the enolase family. Mg(2+) serves as cofactor.

It is found in the cytoplasm. It localises to the secreted. The protein localises to the cell surface. The catalysed reaction is (2R)-2-phosphoglycerate = phosphoenolpyruvate + H2O. It participates in carbohydrate degradation; glycolysis; pyruvate from D-glyceraldehyde 3-phosphate: step 4/5. Its function is as follows. Catalyzes the reversible conversion of 2-phosphoglycerate (2-PG) into phosphoenolpyruvate (PEP). It is essential for the degradation of carbohydrates via glycolysis. In Ralstonia pickettii (strain 12J), this protein is Enolase.